Reading from the N-terminus, the 174-residue chain is NADH-quinone oxidoreductase subunit I (174 aa).

4Fe-4S ferredoxin-type domains follow at residues 61–91 and 103–132; these read LTVK…ITAA and ISYE…LGPE. Residues C71, C74, C77, C81, C112, C115, C118, and C122 each contribute to the [4Fe-4S] cluster site.

This sequence belongs to the complex I 23 kDa subunit family. NDH-1 is composed of 14 different subunits. Subunits NuoA, H, J, K, L, M, N constitute the membrane sector of the complex. [4Fe-4S] cluster serves as cofactor.

It localises to the cell inner membrane. The enzyme catalyses a quinone + NADH + 5 H(+)(in) = a quinol + NAD(+) + 4 H(+)(out). In terms of biological role, NDH-1 shuttles electrons from NADH, via FMN and iron-sulfur (Fe-S) centers, to quinones in the respiratory chain. The immediate electron acceptor for the enzyme in this species is believed to be ubiquinone. Couples the redox reaction to proton translocation (for every two electrons transferred, four hydrogen ions are translocated across the cytoplasmic membrane), and thus conserves the redox energy in a proton gradient. The polypeptide is NADH-quinone oxidoreductase subunit I (Bdellovibrio bacteriovorus (strain ATCC 15356 / DSM 50701 / NCIMB 9529 / HD100)).